The following is a 629-amino-acid chain: MWYQESYDVIVVGGGHAGTEASLAAARMGCKTLLLTHNIDTLGQMSCNPAIGGIGKGHLVKEIDALGGLMATAIDHSAIQFRTLNSSKGPAVRATRAQADRILYRNYVRNTLENQENLTIFQQPCDDLILENDRVVGVSTQMGLKFKGKSVVLTVGTFLSGLIHIGLNNYQGGRAGDPASVNLAAKMRDMPFRMDRLKTGTPPRLDARSLDFSVMEEQAGDTPSPVFSFMGSQADHPEQISCFITHTNEQTHQHIRDGLDRSPMYTGVIEGVGPRYCPSIEDKITRFADKSSHQIFVEPEGLTTHEVYPNGISTSLPFDVQMNLVRSIKGFENAFITRPGYAIEYDYFDPRDLKQSLESKFVQNLYFAGQINGTTGYEEAGAQGLIAGANAANRVKERDEFTLGRDQAYMGVLIDDLATLGTKEPYRMFTSRAEYRLLLREDNADIRLTEQGRKIGLVGDTRWQRFNEKMENVELERQRLRSTWVQKDHTKIDQINALLKTPMSKEASLEDLIRRPEVNYTDLMKIEGLGPAIEDSQASEQIEIQTKYAGYIDRQLDEIAKKKRNEDTKIPRDFDYQQISGLSNEVVAKLKDACPETIGKASRISGITPAAISLLLVYLKKHGLLRKLA.

13–18 (GGGHAG) contributes to the FAD binding site. 273–287 (GPRYCPSIEDKITRF) is a binding site for NAD(+).

Belongs to the MnmG family. As to quaternary structure, homodimer. Heterotetramer of two MnmE and two MnmG subunits. Requires FAD as cofactor.

Its subcellular location is the cytoplasm. In terms of biological role, NAD-binding protein involved in the addition of a carboxymethylaminomethyl (cmnm) group at the wobble position (U34) of certain tRNAs, forming tRNA-cmnm(5)s(2)U34. This is tRNA uridine 5-carboxymethylaminomethyl modification enzyme MnmG from Colwellia psychrerythraea (strain 34H / ATCC BAA-681) (Vibrio psychroerythus).